The sequence spans 331 residues: N-acetyl-alpha-D-glucosaminyl-diphospho-ditrans,octacis-undecaprenol 4-epimerase (331 aa).

NAD(+) is bound by residues 13–14, 34–39, 47–48, S109, Y132, and K136; these read FV, QQSHFY, and DV. Substrate is bound by residues S109 and Y132. Y132 serves as the catalytic Proton acceptor. Substrate is bound by residues 183–184 and 199–201; these read GK and YVG.

Belongs to the NAD(P)-dependent epimerase/dehydratase family. It depends on NAD(+) as a cofactor.

The protein resides in the cell membrane. It catalyses the reaction N-acetyl-alpha-D-glucosaminyl-di-trans,octa-cis-undecaprenyl diphosphate = N-acetyl-alpha-D-galactosaminyl-di-trans,octa-cis-undecaprenyl diphosphate. It functions in the pathway bacterial outer membrane biogenesis; LPS O-antigen biosynthesis. Involved in biosynthesis of the repeating tetrasaccharide unit of the O-antigen. Catalyzes the reversible epimerization of the hydroxyl group at position C4 of undecaprenyl pyrophosphate-N-acetylglucosamine (UndPP-GlcNAc) to yield undecaprenyl pyrophosphate-N-acetylgalactosamine (UndPP-GalNAc). The chain is N-acetyl-alpha-D-glucosaminyl-diphospho-ditrans,octacis-undecaprenol 4-epimerase from Escherichia coli O157:H7.